Consider the following 38-residue polypeptide: Photosystem II reaction center protein X 2 (38 aa).

The helical transmembrane segment at 8-28 (FLWSLVYGAVVLGLLFGAIVF) threads the bilayer.

The protein belongs to the PsbX family. Type 1 subfamily. In terms of assembly, PSII is composed of 1 copy each of membrane proteins PsbA, PsbB, PsbC, PsbD, PsbE, PsbF, PsbH, PsbI, PsbJ, PsbK, PsbL, PsbM, PsbT, PsbX, PsbY, PsbZ, Psb30/Ycf12, peripheral proteins PsbO, CyanoQ (PsbQ), PsbU, PsbV and a large number of cofactors. It forms dimeric complexes.

The protein localises to the cellular thylakoid membrane. Involved in the binding and/or turnover of quinones at the Q(B) site of photosystem II (PSII). PSII is a light-driven water plastoquinone oxidoreductase, using light energy to abstract electrons from H(2)O, generating a proton gradient subsequently used for ATP formation. The polypeptide is Photosystem II reaction center protein X 2 (Synechococcus sp. (strain JA-3-3Ab) (Cyanobacteria bacterium Yellowstone A-Prime)).